We begin with the raw amino-acid sequence, 1578 residues long: BRD4-interacting chromatin-remodeling complex-associated protein (1578 aa).

Disordered stretches follow at residues D80–C101, P631–A673, and I725–R951. The segment covering A86–A96 has biased composition (gly residues). Low complexity-rich tracts occupy residues P631 to Q662 and I764 to P782. 3 stretches are compositionally biased toward pro residues: residues M793 to Q816, P824 to L841, and P865 to H888. The segment covering L889 to A906 has biased composition (low complexity). S929 carries the post-translational modification Phosphoserine. At T931 the chain carries Phosphothreonine. The segment covering P942–R951 has biased composition (pro residues). N6-acetyllysine is present on K1067. Residues E1206–A1316 are disordered. 2 stretches are compositionally biased toward low complexity: residues S1233 to A1247 and A1275 to S1294. K1327 is covalently cross-linked (Glycyl lysine isopeptide (Lys-Gly) (interchain with G-Cter in SUMO2)). 2 disordered regions span residues D1342 to V1435 and V1457 to R1578. Pro residues predominate over residues Q1346–P1370. S1427 bears the Phosphoserine mark. Residues A1502–P1532 show a composition bias toward polar residues. A compositionally biased stretch (pro residues) spans G1538–P1553.

As to quaternary structure, component of the multiprotein chromatin-remodeling complexes SWI/SNF: SWI/SNF-A (BAF), SWI/SNF-B (PBAF) and related complexes. The canonical complex contains a catalytic subunit (either SMARCA4/BRG1/BAF190A or SMARCA2/BRM/BAF190B) and at least SMARCE1, ACTL6A/BAF53, SMARCC1/BAF155, SMARCC2/BAF170, and SMARCB1/SNF5/BAF47. Other subunits specific to each of the complexes may also be present permitting several possible combinations developmentally and tissue specific. Component of the SWI/SNF (GBAF) subcomplex, which includes at least BICRA or BICRAL (mutually exclusive), BRD9, SS18, the core BAF subunits, SMARCA2/BRM, SMARCA4/BRG1/BAF190A, ACTL6A/BAF53, SMARCC1/BAF155, and SMARCD1/BAF60A. Interacts with BRD4; the interaction bridges BRD4 to the GBAF complex.

The protein resides in the nucleus. Component of SWI/SNF chromatin remodeling subcomplex GBAF that carries out key enzymatic activities, changing chromatin structure by altering DNA-histone contacts within a nucleosome in an ATP-dependent manner. May play a role in BRD4-mediated gene transcription. The protein is BRD4-interacting chromatin-remodeling complex-associated protein of Mus musculus (Mouse).